Consider the following 1254-residue polypeptide: Histone-lysine N-methyltransferase eggless (1254 aa).

2 disordered regions span residues alanine 24–arginine 209 and proline 228–threonine 248. 2 stretches are compositionally biased toward basic and acidic residues: residues threonine 40–threonine 57 and lysine 65–glutamate 81. Low complexity predominate over residues serine 112–serine 125. A compositionally biased stretch (basic and acidic residues) spans leucine 136–lysine 162. Residues glutamate 172–aspartate 181 show a composition bias toward polar residues. Basic and acidic residues-rich tracts occupy residues serine 182–glutamine 197 and alanine 234–lysine 243. Residues threonine 391 to glycine 416 are a coiled coil. 2 consecutive Tudor domains span residues arginine 535 to valine 607 and glutamine 634 to glutamine 691. Residues alanine 734 to valine 760 are disordered. Positions serine 739 to alanine 759 are enriched in low complexity. An MBD domain is found at leucine 811–arginine 877. Residues valine 939–serine 1011 form the Pre-SET domain. 9 residues coordinate Zn(2+): cysteine 941, cysteine 943, cysteine 947, cysteine 953, cysteine 955, cysteine 993, cysteine 997, cysteine 999, and cysteine 1003. The SET domain maps to methionine 1014–asparagine 1229. Residues arginine 1024–tryptophan 1026, aspartate 1062, and tyrosine 1064 each bind S-adenosyl-L-methionine. Residues tyrosine 1081–leucine 1090 show a composition bias toward basic and acidic residues. Residues tyrosine 1081–glutamate 1139 are disordered. The segment covering aspartate 1091–aspartate 1106 has biased composition (acidic residues). Positions serine 1123 to glutamate 1134 are enriched in low complexity. S-adenosyl-L-methionine is bound by residues arginine 1183 and asparagine 1186–histidine 1187. 4 residues coordinate Zn(2+): cysteine 1189, cysteine 1242, cysteine 1244, and cysteine 1249. Positions lysine 1238 to leucine 1254 constitute a Post-SET domain.

The protein belongs to the class V-like SAM-binding methyltransferase superfamily. Histone-lysine methyltransferase family. Suvar3-9 subfamily.

Its subcellular location is the nucleus. The protein localises to the chromosome. It carries out the reaction L-lysyl(9)-[histone H3] + 3 S-adenosyl-L-methionine = N(6),N(6),N(6)-trimethyl-L-lysyl(9)-[histone H3] + 3 S-adenosyl-L-homocysteine + 3 H(+). Functionally, histone methyltransferase that specifically trimethylates 'Lys-9' of histone H3 in ovary. H3 'Lys-9' trimethylation represents a specific tag for epigenetic transcriptional repression by recruiting Su(var)205/HP1 to methylated histones. Plays a central role during oogenesis. This is Histone-lysine N-methyltransferase eggless (egg) from Drosophila pseudoobscura pseudoobscura (Fruit fly).